The primary structure comprises 430 residues: Histidine--tRNA ligase (430 aa).

It belongs to the class-II aminoacyl-tRNA synthetase family. Homodimer.

It is found in the cytoplasm. The enzyme catalyses tRNA(His) + L-histidine + ATP = L-histidyl-tRNA(His) + AMP + diphosphate + H(+). The polypeptide is Histidine--tRNA ligase (Parasynechococcus marenigrum (strain WH8102)).